The following is a 201-amino-acid chain: Holliday junction resolvase RecU (201 aa).

Mg(2+) contacts are provided by T87, D89, E102, and Q121.

This sequence belongs to the RecU family. Mg(2+) serves as cofactor.

It localises to the cytoplasm. The catalysed reaction is Endonucleolytic cleavage at a junction such as a reciprocal single-stranded crossover between two homologous DNA duplexes (Holliday junction).. Endonuclease that resolves Holliday junction intermediates in genetic recombination. Cleaves mobile four-strand junctions by introducing symmetrical nicks in paired strands. Promotes annealing of linear ssDNA with homologous dsDNA. Required for DNA repair, homologous recombination and chromosome segregation. This chain is Holliday junction resolvase RecU, found in Listeria monocytogenes serotype 4b (strain F2365).